The primary structure comprises 666 residues: Peptidase S41 family protein phomP1 (666 aa).

The signal sequence occupies residues 1–27 (MSSFLVQTAVVRLFLLGVVFWFPFALS). Asn-70, Asn-214, and Asn-234 each carry an N-linked (GlcNAc...) asparagine glycan. The segment at 303–504 (DVAVLQITSF…LLQAQGVRTV (202 aa)) is peptidase S41 domain. Asn-555 and Asn-612 each carry an N-linked (GlcNAc...) asparagine glycan.

The protein belongs to the peptidase S41A family.

Its pathway is mycotoxin biosynthesis. Functionally, peptidase S41 family protein; part of the gene cluster that mediates the biosynthesis of the phomopsins, a group of hexapeptide mycotoxins which infects lupins and causes lupinosis disease in livestock. Within the pathway, phomP1 and phomP1' are probably involved in the processing of the phomA and phomA' precursors. The pathway starts with the processing of the precursor phomA by several endopeptidases including kexin proteases as well as the cluster-specific S41 family peptidase phomP1 and the oligopeptidase phomG to produce 10 identical copies of the hexapeptide Tyr-Val-Ile-Pro-Ile-Asp. After being excised from the precursor peptide, the core peptides are cyclized and modified post-translationally by enzymes encoded within the gene cluster. The timing and order of proteolysis of the phomA precursor and PTMs are still unknown. Two tyrosinase-like enzymes, phomQ1 and phomQ2, catalyze the chlorination and hydroxylation of Tyr, respectively. PhomYb, is proposed to be involved in the construction of the macrocyclic structure. The other 4 ustYa family proteins may be involved in PTMs that generate the unique structure of phomopsin A. PhomYa is required for the hydroxylation of C-beta of Tyr. PhomYc, phomYd, and phomYe are responsible for the biosynthesis of 2,3-dehydroisoleucine (dIle), 2,3-dehydroaspartic acid (dAsp), and 3,4-dehydroproline (dPro), respectively. While dIle formation by phomYc is indispensable for the installation of dAsp by phomYd, the order of the other PTMs have not been elucidated yet. Most of the biosynthetic enzymes likely have broad substrate specificity, and thus, there might be a metabolic grid from a precursor to phomopsin A. The enzyme(s) responsible for the biosynthesis of 3,4-dehydrovaline (dVal) have also not been identified yet. Finally, phomM acts as an S-adenosylmethionine-dependent alpha-N-methyltransferase that catalyzes two successive N-methylation reactions, converting N-desmethyl-phomopsin A to phomopsin A and phomopsin A further to an N,N-dimethylated congener called phomopsin E. The polypeptide is Peptidase S41 family protein phomP1 (Diaporthe leptostromiformis (Lupinosis disease fungus)).